The following is a 157-amino-acid chain: S-ribosylhomocysteine lyase (157 aa).

Positions 53, 57, and 124 each coordinate Fe cation.

Belongs to the LuxS family. In terms of assembly, homodimer. Fe cation serves as cofactor.

The enzyme catalyses S-(5-deoxy-D-ribos-5-yl)-L-homocysteine = (S)-4,5-dihydroxypentane-2,3-dione + L-homocysteine. Involved in the synthesis of autoinducer 2 (AI-2) which is secreted by bacteria and is used to communicate both the cell density and the metabolic potential of the environment. The regulation of gene expression in response to changes in cell density is called quorum sensing. Catalyzes the transformation of S-ribosylhomocysteine (RHC) to homocysteine (HC) and 4,5-dihydroxy-2,3-pentadione (DPD). This chain is S-ribosylhomocysteine lyase, found in Borreliella afzelii (strain PKo) (Borrelia afzelii).